A 999-amino-acid chain; its full sequence is Embryonic polarity protein dorsal (999 aa).

The segment at 1–44 (MFPNQNNGAAPGQGPAVDGQQSLNYNGLPAQQQQQLAQSTKNVR) is disordered. In terms of domain architecture, RHD spans 47–342 (PYVKITEQPA…TFWNLHRHLK (296 aa)). A Phosphoserine; by PKA modification is found at Ser312. 2 disordered regions span residues 389–424 (FNHE…EQYT) and 670–851 (QARK…SVSG). Residues 402-424 (EQEQSVQQEQYTQEQSLQQEQYT) show a composition bias toward low complexity. The short motif at 668-677 (NSQARKPETP) is the Nuclear export signal element. A compositionally biased stretch (pro residues) spans 677–686 (PMRPVPPVPP). A compositionally biased stretch (basic and acidic residues) spans 710–719 (KQDSNAENRS). Residues 720-734 (IEANTVQTKPSTGES) are compositionally biased toward polar residues. Positions 756–773 (KKPGFFSKLFSRRKSKPD) match the Nuclear localization signal motif. 2 stretches are compositionally biased toward low complexity: residues 819–829 (SNPAPAKSSPV) and 836–851 (SKLT…SVSG).

In terms of assembly, interacts with tamo via the nuclear localization signal. Interacts with emb, a component of the nuclear export complex. As to expression, in unchallenged larvae, expression of both isoforms is seen in fat body and gut (isoform A is more abundant). After immune challenge levels of both isoforms are enhanced.

It is found in the cytoplasm. Its subcellular location is the nucleus. In terms of biological role, embryonic developmental transcription factor. The lateral or ventral identity of a cell depends upon the concentration of this protein in its nucleus during the blastoderm stage. Acts as a morphogenetic transcription factor that specifically binds to the kappa-B-related consensus sequence 5'-GRGAAAANCC-3', located in the enhancer region of zygotic genes such as Zen, Twist, Snail and Decapentaplegic, promoting their expression. Part of a signaling pathway involving NF-kappa-B and Toll-related receptors, that functions in the apoptosis of unfit cells during cell competition. Mediates an immune response in larvae. May be part of a NF-kappa-B and Tollo signaling cascade that regulates development of the peripheral nervous system. This chain is Embryonic polarity protein dorsal (dl), found in Drosophila melanogaster (Fruit fly).